The chain runs to 542 residues: Glucose-6-phosphate isomerase (542 aa).

The active-site Proton donor is the Glu-354. Residues His-385 and Lys-505 contribute to the active site.

The protein belongs to the GPI family.

It localises to the cytoplasm. It catalyses the reaction alpha-D-glucose 6-phosphate = beta-D-fructose 6-phosphate. The protein operates within carbohydrate biosynthesis; gluconeogenesis. It functions in the pathway carbohydrate degradation; glycolysis; D-glyceraldehyde 3-phosphate and glycerone phosphate from D-glucose: step 2/4. Functionally, catalyzes the reversible isomerization of glucose-6-phosphate to fructose-6-phosphate. This Nitrosospira multiformis (strain ATCC 25196 / NCIMB 11849 / C 71) protein is Glucose-6-phosphate isomerase.